The sequence spans 322 residues: N-acetyl-gamma-glutamyl-phosphate reductase (322 aa).

Cys-132 is an active-site residue.

The protein belongs to the NAGSA dehydrogenase family. Type 1 subfamily.

The protein resides in the cytoplasm. The enzyme catalyses N-acetyl-L-glutamate 5-semialdehyde + phosphate + NADP(+) = N-acetyl-L-glutamyl 5-phosphate + NADPH + H(+). It participates in amino-acid biosynthesis; L-arginine biosynthesis; N(2)-acetyl-L-ornithine from L-glutamate: step 3/4. Functionally, catalyzes the NADPH-dependent reduction of N-acetyl-5-glutamyl phosphate to yield N-acetyl-L-glutamate 5-semialdehyde. This Parabacteroides distasonis (strain ATCC 8503 / DSM 20701 / CIP 104284 / JCM 5825 / NCTC 11152) protein is N-acetyl-gamma-glutamyl-phosphate reductase.